Reading from the N-terminus, the 552-residue chain is Putative transport protein YPTS_4123 (552 aa).

The next 6 membrane-spanning stretches (helical) occupy residues 1-21 (MSAI…GLWI), 26-46 (IYGV…VGHF), 65-85 (FGLI…FFSS), 96-116 (FAIL…KLFA), 119-139 (LPII…LGAA), and 158-178 (MGYA…MWLI). RCK C-terminal domains lie at 192–276 (AFDS…VVGE) and 279–361 (DVTL…IVGN). 6 consecutive transmembrane segments (helical) span residues 371–391 (MLPV…PLFV), 393–413 (GFPA…ALIL), 439–459 (IVLF…NTLV), 464–484 (LAWI…VGIL), 493–513 (YLTL…LAFA), and 530–550 (VYPL…VLFW).

It belongs to the AAE transporter (TC 2.A.81) family. YidE subfamily.

Its subcellular location is the cell membrane. This chain is Putative transport protein YPTS_4123, found in Yersinia pseudotuberculosis serotype IB (strain PB1/+).